The following is a 156-amino-acid chain: Radiation-inducible immediate-early gene IEX-1 (156 aa).

The disordered stretch occupies residues 1-62 (MCHSRSCHPT…SASRGHRKRS (62 aa)). Topologically, residues 1–82 (MCHSRSCHPT…RQLPVEEPNP (82 aa)) are cytoplasmic. The residue at position 18 (threonine 18) is a Phosphothreonine; by MAPK1. A Phosphoserine modification is found at serine 31. The segment covering 44 to 55 (PAAAPAGRPSAS) has biased composition (low complexity). A helical; Signal-anchor for type II membrane protein membrane pass occupies residues 83–99 (AKRLLFLLLTIVFCQIL). Over 100–156 (MAEEGVPAPLPPEDAPNAASLAPTPVSAVLEPFNLTSEPSDYALDLSTFLQQHPAAF) the chain is Extracellular. The residue at position 123 (threonine 123) is a Phosphothreonine; by MAPK1. Serine 126 bears the Phosphoserine; by MAPK1 mark. N-linked (GlcNAc...) asparagine glycosylation is present at asparagine 133.

The protein belongs to the IER3 family. As to quaternary structure, interacts with the PPP2R5C-PP2A holoenzyme and ERK kinases; regulates ERK dephosphorylation. Post-translationally, phosphorylated at Thr-18, Thr-123 and Ser-126 by MAPK1/ERK2 and probably MAPK3/ERK1. Upon phosphorylation by MAPK1/ERK2 and MAPK3/ERK1, acquires the ability to inhibit cell death induced by various stimuli. In terms of processing, glycosylated.

Its subcellular location is the membrane. May play a role in the ERK signaling pathway by inhibiting the dephosphorylation of ERK by phosphatase PP2A-PPP2R5C holoenzyme. Also acts as an ERK downstream effector mediating survival. As a member of the NUPR1/RELB/IER3 survival pathway, may provide pancreatic ductal adenocarcinoma with remarkable resistance to cell stress, such as starvation or gemcitabine treatment. The polypeptide is Radiation-inducible immediate-early gene IEX-1 (IER3) (Homo sapiens (Human)).